A 200-amino-acid chain; its full sequence is Cytochrome c biogenesis ATP-binding export protein CcmA (200 aa).

In terms of domain architecture, ABC transporter spans 3-199; the sequence is LSGRRVICVR…DSRELRIGGV (197 aa). Position 35 to 42 (35 to 42) interacts with ATP; it reads GRNGSGKT.

It belongs to the ABC transporter superfamily. CcmA exporter (TC 3.A.1.107) family. The complex is composed of two ATP-binding proteins (CcmA) and two transmembrane proteins (CcmB).

Its subcellular location is the cell inner membrane. It catalyses the reaction heme b(in) + ATP + H2O = heme b(out) + ADP + phosphate + H(+). Its function is as follows. Part of the ABC transporter complex CcmAB involved in the biogenesis of c-type cytochromes; once thought to export heme, this seems not to be the case, but its exact role is uncertain. Responsible for energy coupling to the transport system. This chain is Cytochrome c biogenesis ATP-binding export protein CcmA, found in Bradyrhizobium diazoefficiens (strain JCM 10833 / BCRC 13528 / IAM 13628 / NBRC 14792 / USDA 110).